The following is a 469-amino-acid chain: IME2-dependent-signaling protein (469 aa).

An N-acetylmethionine modification is found at methionine 1. Residue threonine 13 is modified to Phosphothreonine. Disordered regions lie at residues lysine 22–methionine 55, alanine 67–glutamine 92, and aspartate 117–threonine 143. Phosphoserine occurs at positions 23, 27, and 39. Composition is skewed to polar residues over residues serine 25–glycine 42 and alanine 67–glutamine 82. Serine 122, serine 130, serine 136, serine 147, and serine 148 each carry phosphoserine.

Its function is as follows. Seems to act indirectly to modify IME2 activity, thus permitting IME2 to carry out later meiotic functions. This is IME2-dependent-signaling protein (IDS2) from Saccharomyces cerevisiae (strain ATCC 204508 / S288c) (Baker's yeast).